Reading from the N-terminus, the 432-residue chain is Asparagine--tRNA ligase (432 aa).

It belongs to the class-II aminoacyl-tRNA synthetase family. As to quaternary structure, homodimer.

It is found in the cytoplasm. It carries out the reaction tRNA(Asn) + L-asparagine + ATP = L-asparaginyl-tRNA(Asn) + AMP + diphosphate + H(+). This Lactobacillus helveticus (strain DPC 4571) protein is Asparagine--tRNA ligase.